We begin with the raw amino-acid sequence, 93 residues long: Large ribosomal subunit protein bL27 (93 aa).

Residues Met1–Phe9 constitute a propeptide that is removed on maturation.

This sequence belongs to the bacterial ribosomal protein bL27 family. The N-terminus is cleaved by ribosomal processing cysteine protease Prp.

The protein is Large ribosomal subunit protein bL27 of Bacillus licheniformis (strain ATCC 14580 / DSM 13 / JCM 2505 / CCUG 7422 / NBRC 12200 / NCIMB 9375 / NCTC 10341 / NRRL NRS-1264 / Gibson 46).